A 458-amino-acid chain; its full sequence is UPF0210 protein MmarC6_1246 (458 aa).

It belongs to the UPF0210 family.

The protein is UPF0210 protein MmarC6_1246 of Methanococcus maripaludis (strain C6 / ATCC BAA-1332).